A 763-amino-acid polypeptide reads, in one-letter code: Phosphoglycerol transferase I (763 aa).

Helical transmembrane passes span 4–19 (LLSFALFLASVLIYAW), 26–48 (WWFAATLTVLGLFVVLNITLFAS), 76–98 (YILPGIGIVLGLTAVFGALGWIL), and 105–127 (PHHFGYSLLALLLALGSVDASPA).

Belongs to the OpgB family.

It is found in the cell inner membrane. The catalysed reaction is a phosphatidylglycerol + a membrane-derived-oligosaccharide D-glucose = a 1,2-diacyl-sn-glycerol + a membrane-derived-oligosaccharide 6-(glycerophospho)-D-glucose.. Its pathway is glycan metabolism; osmoregulated periplasmic glucan (OPG) biosynthesis. Functionally, transfers a phosphoglycerol residue from phosphatidylglycerol to the membrane-bound nascent glucan backbones. The protein is Phosphoglycerol transferase I of Escherichia coli O157:H7.